A 324-amino-acid chain; its full sequence is Adenine deaminase (324 aa).

Residues H11, H13, and H189 each coordinate Zn(2+). The Proton donor role is filled by E192. D270 lines the Zn(2+) pocket. Substrate is bound at residue D271.

It belongs to the metallo-dependent hydrolases superfamily. Adenosine and AMP deaminases family. Adenine deaminase type 2 subfamily. The cofactor is Zn(2+).

The enzyme catalyses adenine + H2O + H(+) = hypoxanthine + NH4(+). Functionally, catalyzes the hydrolytic deamination of adenine to hypoxanthine. Plays an important role in the purine salvage pathway and in nitrogen catabolism. The protein is Adenine deaminase of Sinorhizobium medicae (strain WSM419) (Ensifer medicae).